Consider the following 102-residue polypeptide: Large ribosomal subunit protein uL24 (102 aa).

Belongs to the universal ribosomal protein uL24 family. Part of the 50S ribosomal subunit.

In terms of biological role, one of two assembly initiator proteins, it binds directly to the 5'-end of the 23S rRNA, where it nucleates assembly of the 50S subunit. Its function is as follows. One of the proteins that surrounds the polypeptide exit tunnel on the outside of the subunit. The protein is Large ribosomal subunit protein uL24 of Herpetosiphon aurantiacus (strain ATCC 23779 / DSM 785 / 114-95).